A 410-amino-acid chain; its full sequence is Mating-type locus allele B3 protein (410 aa).

The segment at 1–110 (MSRDPKLSLS…ANVVSPGEGC (110 aa)) is variable domain between B alleles. A DNA-binding region (homeobox; TALE-type) is located at residues 107-184 (GEGCRNLSED…NARRRSGWSH (78 aa)). Residues 111-410 (RNLSEDLPAY…PFLCLSVAFV (300 aa)) form a highly conserved between B alleles region. Disordered stretches follow at residues 203 to 224 (AKLS…PSDD) and 278 to 335 (TPKP…TPEL). The segment covering 205–219 (LSSSNQSTPPSLTSE) has biased composition (polar residues). A Nuclear localization signal motif is present at residues 276–308 (KKTPKPGMPRPVTTVAKRHPARKTKPAAKPKSR). The span at 291 to 307 (AKRHPARKTKPAAKPKS) shows a compositional bias: basic residues. A compositionally biased stretch (polar residues) spans 312-335 (PRASTTPSIDSTLDSSKLESTPEL). The segment at 333 to 410 (PELSMCSTAD…PFLCLSVAFV (78 aa)) is not essential for B3 function.

Belongs to the TALE/M-ATYP homeobox family.

It localises to the nucleus. The B locus has at least 25 alleles, and any combination of two different B alleles yields a multimeric regulatory protein, that activates genes responsible for the pathogenicity and for the sexual development of the fungus within the corn plant. The chain is Mating-type locus allele B3 protein from Mycosarcoma maydis (Corn smut fungus).